Consider the following 96-residue polypeptide: Putative pterin-4-alpha-carbinolamine dehydratase (96 aa).

Belongs to the pterin-4-alpha-carbinolamine dehydratase family.

The enzyme catalyses (4aS,6R)-4a-hydroxy-L-erythro-5,6,7,8-tetrahydrobiopterin = (6R)-L-erythro-6,7-dihydrobiopterin + H2O. In Brucella anthropi (strain ATCC 49188 / DSM 6882 / CCUG 24695 / JCM 21032 / LMG 3331 / NBRC 15819 / NCTC 12168 / Alc 37) (Ochrobactrum anthropi), this protein is Putative pterin-4-alpha-carbinolamine dehydratase.